Here is a 185-residue protein sequence, read N- to C-terminus: Probable chorismate pyruvate-lyase (185 aa).

The substrate site is built by Arg75, Leu113, and Glu174.

The protein belongs to the UbiC family.

It is found in the cytoplasm. It catalyses the reaction chorismate = 4-hydroxybenzoate + pyruvate. It participates in cofactor biosynthesis; ubiquinone biosynthesis. Functionally, removes the pyruvyl group from chorismate, with concomitant aromatization of the ring, to provide 4-hydroxybenzoate (4HB) for the ubiquinone pathway. The protein is Probable chorismate pyruvate-lyase of Aromatoleum aromaticum (strain DSM 19018 / LMG 30748 / EbN1) (Azoarcus sp. (strain EbN1)).